Reading from the N-terminus, the 117-residue chain is Bomanin Bicipital 1 (117 aa).

The first 20 residues, methionine 1–alanine 20, serve as a signal peptide directing secretion. Intrachain disulfides connect cysteine 29/cysteine 32 and cysteine 107/cysteine 110.

Belongs to the bomanin family. As to expression, hemolymph (at protein level).

Its subcellular location is the secreted. Functionally, secreted immune-induced peptide induced by Toll signaling. Has a role in resistance to bacterial and fungal infections. The polypeptide is Bomanin Bicipital 1 (Drosophila melanogaster (Fruit fly)).